The primary structure comprises 541 residues: Protein yellow (541 aa).

Positions 1-21 (MFQDKGWVLVTLIALVTPSWA) are cleaved as a signal peptide. Asn144 carries N-linked (GlcNAc...) asparagine glycosylation.

This sequence belongs to the major royal jelly protein family.

The protein resides in the secreted. Functionally, controls the pigmentation pattern of the adult cuticle and larval mouth parts. The chain is Protein yellow (y) from Drosophila erecta (Fruit fly).